The sequence spans 343 residues: Histone H1.8 (343 aa).

Residues 1-32 (MAPGSIASSDTSSSTSSSSTSSASSASAEGSS) show a composition bias toward low complexity. 2 disordered regions span residues 1 to 50 (MAPG…VRAP) and 122 to 343 (ATGS…EAEG). In terms of domain architecture, H15 spans 52–130 (RHPPVLRMVL…GATGSFKLVP (79 aa)). Over residues 132-142 (DKRKIPPRKTA) the composition is skewed to basic residues. Composition is skewed to basic and acidic residues over residues 150–183 (EGKD…ERAA), 199–219 (QTKD…RPDK), and 235–247 (KVKE…ADTK). The Nuclear localization signal signature appears at 161 to 176 (KKDPANTVEVKKGSRK). The span at 253–265 (QPGSQSSKSTVTK) shows a compositional bias: polar residues.

It belongs to the histone H1/H5 family. In terms of tissue distribution, oocyte (at protein level).

The protein resides in the cytoplasm. It localises to the nucleus. The protein localises to the chromosome. May play a key role in the control of gene expression during oogenesis and early embryogenesis, presumably through the perturbation of chromatin structure. Essential for meiotic maturation of germinal vesicle-stage oocytes. The somatic type linker histone H1c is rapidly replaced by H1oo in a donor nucleus transplanted into an oocyte. The greater mobility of H1oo as compared to H1c may contribute to this rapid replacement and increased instability of the embryonic chromatin structure. The rapid replacement of H1c with H1oo may play an important role in nuclear remodeling. This chain is Histone H1.8, found in Bos taurus (Bovine).